The primary structure comprises 438 residues: UDP-N-acetylmuramoylalanine--D-glutamate ligase (438 aa).

Residue 112-118 (GSNGKST) coordinates ATP.

Belongs to the MurCDEF family.

It is found in the cytoplasm. The catalysed reaction is UDP-N-acetyl-alpha-D-muramoyl-L-alanine + D-glutamate + ATP = UDP-N-acetyl-alpha-D-muramoyl-L-alanyl-D-glutamate + ADP + phosphate + H(+). Its pathway is cell wall biogenesis; peptidoglycan biosynthesis. Its function is as follows. Cell wall formation. Catalyzes the addition of glutamate to the nucleotide precursor UDP-N-acetylmuramoyl-L-alanine (UMA). The sequence is that of UDP-N-acetylmuramoylalanine--D-glutamate ligase from Yersinia pseudotuberculosis serotype I (strain IP32953).